Consider the following 301-residue polypeptide: Nucleotide-binding protein ELI_02120 (301 aa).

12–19 contributes to the ATP binding site; that stretch reads GMSGAGKS. 62-65 is a binding site for GTP; it reads DSRT.

This sequence belongs to the RapZ-like family.

Its function is as follows. Displays ATPase and GTPase activities. The polypeptide is Nucleotide-binding protein ELI_02120 (Erythrobacter litoralis (strain HTCC2594)).